Reading from the N-terminus, the 296-residue chain is N-acetylmuramic acid 6-phosphate etherase 2 (296 aa).

The 164-residue stretch at 55–218 folds into the SIS domain; the sequence is IVANFKAGGR…STASMVGIGK (164 aa). Glu83 functions as the Proton donor in the catalytic mechanism. Glu114 is an active-site residue.

Belongs to the GCKR-like family. MurNAc-6-P etherase subfamily. Homodimer.

It catalyses the reaction N-acetyl-D-muramate 6-phosphate + H2O = N-acetyl-D-glucosamine 6-phosphate + (R)-lactate. It functions in the pathway amino-sugar metabolism; N-acetylmuramate degradation. Its function is as follows. Specifically catalyzes the cleavage of the D-lactyl ether substituent of MurNAc 6-phosphate, producing GlcNAc 6-phosphate and D-lactate. This is N-acetylmuramic acid 6-phosphate etherase 2 from Lactiplantibacillus plantarum (strain ATCC BAA-793 / NCIMB 8826 / WCFS1) (Lactobacillus plantarum).